Consider the following 556-residue polypeptide: PPE family protein PPE2 (556 aa).

Residues 8 to 164 (ASPPEVHSAL…ASYQAVSTAA (157 aa)) form a PPE region. The SH3-like stretch occupies residues 201–256 (QKIGYTDFYNNVIQPFINWLTNLPFLQAMFSGFDPWLPSLGNPLTFLSPANIAFAL). A leucine zipper motif region spans residues 319-340 (LEQTLALLPAALPLLAAPLAPL). Disordered regions lie at residues 385 to 418 (TPTP…PPVT) and 443 to 556 (GTGV…TRVE). The segment covering 400–417 (PTPPLGPPPPPVTAPPPV) has biased composition (pro residues). The segment covering 456–471 (AEAPASAAAPEEQVQP) has biased composition (low complexity). Residues 472 to 481 (QRRRRPKIKQ) are compositionally biased toward basic residues. Residues 473–481 (RRRRPKIKQ) carry the Nuclear localization signal motif.

The protein belongs to the mycobacterial PPE family.

Its subcellular location is the secreted. It localises to the host cytoplasm. The protein localises to the host nucleus. Inhibits nitric oxide (NO) production in activated macrophages. Acts by inhibiting expression of the host inducible nitric oxide synthase (iNOS). PPE2 is translocated into the host macrophage nucleus, where it interacts with a GATA-binding site overlapping with the TATA box of NOS2 (iNOS) promoter, and strongly inhibits NOS2 gene transcription. Reduction in NO production in turn facilitates intracellular survival of the bacilli inside the macrophage. In addition, disrupts the assembly of NADPH oxidase complex, which inhibits NADPH oxidase-mediated reactive oxygen species (ROS) generation in macrophages and favors M.tuberculosis survival. Acts by interacting with NCF2, the cytosolic subunit of NADPH oxidase, and preventing translocation of NCF2 and NCF1 to the membrane, which causes a reduction of the functional assembly of NADPH oxidase complex and a decrease in NADPH oxidase activity. This is PPE family protein PPE2 (PPE2) from Mycobacterium tuberculosis (strain CDC 1551 / Oshkosh).